A 629-amino-acid chain; its full sequence is Mitochondrial Rho GTPase 1 (629 aa).

Over methionine 1–arginine 600 the chain is Cytoplasmic. The region spanning serine 2 to histidine 170 is the Miro 1 domain. GTP contacts are provided by residues glycine 11–serine 18, aspartate 59–arginine 63, and asparagine 115–aspartate 118. 2 consecutive EF-hand domains span residues alanine 186–lysine 221 and alanine 306–leucine 341. Aspartate 199, aspartate 201, aspartate 203, tyrosine 205, glutamate 210, aspartate 319, aspartate 321, aspartate 323, and glutamate 330 together coordinate Ca(2+). Residues arginine 421–asparagine 585 enclose the Miro 2 domain. GTP-binding positions include glycine 430–serine 437, glutamate 466–glycine 470, and leucine 535–aspartate 538. A helical; Anchor for type IV membrane protein transmembrane segment spans residues alanine 601–tryptophan 621. The Mitochondrial intermembrane portion of the chain corresponds to arginine 622–alanine 629.

It belongs to the mitochondrial Rho GTPase family.

Its subcellular location is the mitochondrion outer membrane. Its function is as follows. Mitochondrial GTPase involved in mitochondrial trafficking. Probably involved in control of anterograde transport of mitochondria and their subcellular distribution. This chain is Mitochondrial Rho GTPase 1 (gem-1), found in Neurospora crassa (strain ATCC 24698 / 74-OR23-1A / CBS 708.71 / DSM 1257 / FGSC 987).